We begin with the raw amino-acid sequence, 138 residues long: ATP synthase epsilon chain (138 aa).

It belongs to the ATPase epsilon chain family. In terms of assembly, F-type ATPases have 2 components, CF(1) - the catalytic core - and CF(0) - the membrane proton channel. CF(1) has five subunits: alpha(3), beta(3), gamma(1), delta(1), epsilon(1). CF(0) has three main subunits: a, b and c.

The protein resides in the cell inner membrane. In terms of biological role, produces ATP from ADP in the presence of a proton gradient across the membrane. In Polynucleobacter necessarius subsp. necessarius (strain STIR1), this protein is ATP synthase epsilon chain.